Here is a 467-residue protein sequence, read N- to C-terminus: MASLLQSERVLYLVQGEKKVRAPLSQLYFCRYCSELRSLECVSHEVDSHYCPSCLENMPSAEAKLKKNRCANCFDCPGCMHTLSTRATSISTQLPDDPAKTTMKKAYYLACGFCRWTSRDVGMADKSVASGGWQEPENPHTQRMNKLIEYYQQLAQKEKVERDRKKLARRRNYMPLAFSQHTIHVVDKYSLGTRLQRPRAGASISTLAGLSLREGEDQKEVKIEPAQAVAEVEPLPEDYYTRPVNLTEVTTLQQRLLQPDLQPVSASQLYPRHKHLLIKRSLRCRKCEHNLSKPEFNPTSIKFKIQLVAVNYIPEVRIMSIPNLRYMKESQVLLTLTNPVENLTHVTLLECDEGDPDNINSTAKVVVPPKELILAGKDAAAEYDELAEPQDFQDDPDIVAFRKANKVGIFIKVTPQREEGEVTVCFKMKHDFKNLAAPIRPVEEGDQGTEVIWLTQHVELSFGPLLP.

The residue at position 2 (Ala2) is an N-acetylalanine. Positions Gln152–Asn172 form a coiled coil. Ser203 bears the Phosphoserine mark. Residue Lys222 forms a Glycyl lysine isopeptide (Lys-Gly) (interchain with G-Cter in SUMO2) linkage. Thr414 is modified (phosphothreonine).

It belongs to the dynactin subunit 4 family. Subunit of dynactin, a multiprotein complex part of a tripartite complex with dynein and a adapter, such as BICDL1, BICD2 or HOOK3. The dynactin complex is built around ACTR1A/ACTB filament and consists of an actin-related filament composed of a shoulder domain, a pointed end and a barbed end. Its length is defined by its flexible shoulder domain. The soulder is composed of 2 DCTN1 subunits, 4 DCTN2 and 2 DCTN3. The 4 DCNT2 (via N-terminus) bind the ACTR1A filament and act as molecular rulers to determine the length. The pointed end is important for binding dynein-dynactin cargo adapters. Consists of 4 subunits: ACTR10, DCNT4, DCTN5 and DCTN6. The barbed end is composed of a CAPZA1:CAPZB heterodimers, which binds ACTR1A/ACTB filament and dynactin and stabilizes dynactin. Interacts with ATP7B, but not ATP7A, in a copper-dependent manner. Interacts with ANK2; this interaction is required for localization at costameres. Interacts with N4BP2L1.

The protein resides in the cytoplasm. It is found in the cytoskeleton. The protein localises to the microtubule organizing center. Its subcellular location is the centrosome. It localises to the stress fiber. The protein resides in the cell cortex. It is found in the myofibril. The protein localises to the sarcomere. Functionally, part of the dynactin complex that activates the molecular motor dynein for ultra-processive transport along microtubules. The polypeptide is Dynactin subunit 4 (Dctn4) (Mus musculus (Mouse)).